A 72-amino-acid polypeptide reads, in one-letter code: UPF0352 protein NTHI1007 (72 aa).

This sequence belongs to the UPF0352 family.

The sequence is that of UPF0352 protein NTHI1007 from Haemophilus influenzae (strain 86-028NP).